Reading from the N-terminus, the 338-residue chain is Purple acid phosphatase 17 (338 aa).

The N-terminal stretch at 1–31 (MNSGRRSLMSATASLSLLLCIFTTFVVVSNG) is a signal peptide. Aspartate 53 is a binding site for Fe cation. Asparagine 61 carries an N-linked (GlcNAc...) asparagine glycan. Aspartate 86 and tyrosine 89 together coordinate Fe cation. A Zn(2+)-binding site is contributed by aspartate 86. Residues asparagine 124 and histidine 218 each contribute to the Zn(2+) site. Histidine 227 (proton donor) is an active-site residue. Residue histidine 253 participates in Zn(2+) binding. 253 to 255 (HDH) provides a ligand contact to substrate. Histidine 255 serves as a coordination point for Fe cation.

It belongs to the metallophosphoesterase superfamily. Purple acid phosphatase family. Homodimer. Fe cation is required as a cofactor. It depends on Zn(2+) as a cofactor. As to expression, expressed in roots, stems, leaves, flowers and siliques.

It is found in the secreted. The enzyme catalyses a phosphate monoester + H2O = an alcohol + phosphate. It carries out the reaction 2 a phenolic donor + H2O2 = 2 a phenolic radical donor + 2 H2O. With respect to regulation, inhibited by phosphate and molybdate. In terms of biological role, metallo-phosphoesterase involved in phosphate metabolism. Has a peroxidase activity. This chain is Purple acid phosphatase 17 (PAP17), found in Arabidopsis thaliana (Mouse-ear cress).